The following is a 253-amino-acid chain: Small ribosomal subunit protein uS5 (253 aa).

Residues 1-30 (MAESAPRGFGRGGRGGRGRGRGRRGAKRDE) are disordered. Residues 14-26 (RGGRGRGRGRRGA) show a composition bias toward basic residues. Residues 75-138 (LNDEVMKVVP…IMGKLSIMPI (64 aa)) enclose the S5 DRBM domain.

The protein belongs to the universal ribosomal protein uS5 family. As to quaternary structure, component of the small ribosomal subunit (SSU). Mature yeast ribosomes consist of a small (40S) and a large (60S) subunit. The 40S small subunit contains 1 molecule of ribosomal RNA (18S rRNA) and at least 33 different proteins. The large 60S subunit contains 3 rRNA molecules (25S, 5.8S and 5S rRNA) and at least 46 different proteins. Interacts with snoRNA U3. Interacts with MPP10. Component of the ribosomal small subunit (SSU) processome composed of at least 40 protein subunits and snoRNA U3.

The protein localises to the cytoplasm. In terms of biological role, component of the ribosome, a large ribonucleoprotein complex responsible for the synthesis of proteins in the cell. The small ribosomal subunit (SSU) binds messenger RNAs (mRNAs) and translates the encoded message by selecting cognate aminoacyl-transfer RNA (tRNA) molecules. The large subunit (LSU) contains the ribosomal catalytic site termed the peptidyl transferase center (PTC), which catalyzes the formation of peptide bonds, thereby polymerizing the amino acids delivered by tRNAs into a polypeptide chain. The nascent polypeptides leave the ribosome through a tunnel in the LSU and interact with protein factors that function in enzymatic processing, targeting, and the membrane insertion of nascent chains at the exit of the ribosomal tunnel. Plays a role in the assembly and function of the 40S ribosomal subunit. Mutations in this protein affects the control of translational fidelity. Involved in nucleolar processing of pre-18S ribosomal RNA and ribosome assembly. Its function is as follows. Component of the ribosome, a large ribonucleoprotein complex responsible for the synthesis of proteins in the cell. The small ribosomal subunit (SSU) binds messenger RNAs (mRNAs) and translates the encoded message by selecting cognate aminoacyl-transfer RNA (tRNA) molecules. The large subunit (LSU) contains the ribosomal catalytic site termed the peptidyl transferase center (PTC), which catalyzes the formation of peptide bonds, thereby polymerizing the amino acids delivered by tRNAs into a polypeptide chain. The nascent polypeptides leave the ribosome through a tunnel in the LSU and interact with protein factors that function in enzymatic processing, targeting, and the membrane insertion of nascent chains at the exit of the ribosomal tunnel. uS5 is important for the assembly and function of the 40S ribosomal subunit. Mutations in this protein affects the control of translational fidelity. Involved in nucleolar processing of pre-18S ribosomal RNA and ribosome assembly. This chain is Small ribosomal subunit protein uS5 (rps2), found in Schizosaccharomyces pombe (strain 972 / ATCC 24843) (Fission yeast).